Here is a 360-residue protein sequence, read N- to C-terminus: Probable dual-specificity RNA methyltransferase RlmN (360 aa).

The active-site Proton acceptor is the E91. Residues 97–335 (QHYGQSVCVT…CVVRQEHGTD (239 aa)) form the Radical SAM core domain. A disulfide bridge links C104 with C340. 3 residues coordinate [4Fe-4S] cluster: C111, C115, and C118. Residues 163 to 164 (GE), S195, 218 to 220 (SLH), and N296 each bind S-adenosyl-L-methionine. C340 (S-methylcysteine intermediate) is an active-site residue.

Belongs to the radical SAM superfamily. RlmN family. [4Fe-4S] cluster is required as a cofactor.

It localises to the cytoplasm. It carries out the reaction adenosine(2503) in 23S rRNA + 2 reduced [2Fe-2S]-[ferredoxin] + 2 S-adenosyl-L-methionine = 2-methyladenosine(2503) in 23S rRNA + 5'-deoxyadenosine + L-methionine + 2 oxidized [2Fe-2S]-[ferredoxin] + S-adenosyl-L-homocysteine. The enzyme catalyses adenosine(37) in tRNA + 2 reduced [2Fe-2S]-[ferredoxin] + 2 S-adenosyl-L-methionine = 2-methyladenosine(37) in tRNA + 5'-deoxyadenosine + L-methionine + 2 oxidized [2Fe-2S]-[ferredoxin] + S-adenosyl-L-homocysteine. Its function is as follows. Specifically methylates position 2 of adenine 2503 in 23S rRNA and position 2 of adenine 37 in tRNAs. The chain is Probable dual-specificity RNA methyltransferase RlmN from Streptococcus equi subsp. equi (strain 4047).